A 160-amino-acid polypeptide reads, in one-letter code: V-type proton ATPase subunit c (160 aa).

Topologically, residues 1–6 are lumenal; the sequence is MSDLCP. The helical transmembrane segment at 7–27 threads the bilayer; that stretch reads VYAPFFGSIGCAAAIVFTCFG. Residues 28 to 53 are Cytoplasmic-facing; sequence ASYGTAKSGVGICATSVTRPDLLVKN. Residues 54-74 traverse the membrane as a helical segment; it reads VVPVVMAGIIAIYGLVVSVLV. The Lumenal portion of the chain corresponds to 75–90; the sequence is SDSLSQKQALYTGFIQ. Residues 91-111 traverse the membrane as a helical segment; it reads LGAGLSVGLSGLAAGFAIGIV. Residues 112–129 are Cytoplasmic-facing; that stretch reads GDAGVRGTAQQPRLFVGM. Residues 130-150 form a helical membrane-spanning segment; that stretch reads ILILIFAEVLGLYGLIVALLL. Over 151–160 the chain is Lumenal; the sequence is NSRASQDVTC.

This sequence belongs to the V-ATPase proteolipid subunit family. V-ATPase is a heteromultimeric enzyme composed of a peripheral catalytic V1 complex (components A to H) attached to an integral membrane V0 proton pore complex (components: a, c, c', c'', d, e, f and VOA1). The decameric c-ring forms the proton-conducting pore, and is composed of eight proteolipid subunits c, one subunit c' and one subunit c''.

It is found in the vacuole membrane. Proton-conducting pore forming subunit of the V0 complex of vacuolar(H+)-ATPase (V-ATPase), a multisubunit enzyme composed of a peripheral complex (V1) that hydrolyzes ATP and a membrane integral complex (V0) that translocates protons. V-ATPase is responsible for acidifying and maintaining the pH of intracellular compartments. The chain is V-type proton ATPase subunit c (VMA3) from Candida tropicalis (Yeast).